Here is a 101-residue protein sequence, read N- to C-terminus: NADH-quinone oxidoreductase subunit K (101 aa).

3 helical membrane-spanning segments follow: residues 4–24 (LGYF…GIII), 30–50 (IVLL…FIAF), and 61–81 (IFVF…LAIL).

It belongs to the complex I subunit 4L family. In terms of assembly, NDH-1 is composed of 14 different subunits. Subunits NuoA, H, J, K, L, M, N constitute the membrane sector of the complex.

Its subcellular location is the cell inner membrane. It catalyses the reaction a quinone + NADH + 5 H(+)(in) = a quinol + NAD(+) + 4 H(+)(out). Functionally, NDH-1 shuttles electrons from NADH, via FMN and iron-sulfur (Fe-S) centers, to quinones in the respiratory chain. The immediate electron acceptor for the enzyme in this species is believed to be ubiquinone. Couples the redox reaction to proton translocation (for every two electrons transferred, four hydrogen ions are translocated across the cytoplasmic membrane), and thus conserves the redox energy in a proton gradient. This is NADH-quinone oxidoreductase subunit K from Coxiella burnetii (strain CbuG_Q212) (Coxiella burnetii (strain Q212)).